We begin with the raw amino-acid sequence, 208 residues long: N-(5'-phosphoribosyl)anthranilate isomerase (208 aa).

It belongs to the TrpF family.

The catalysed reaction is N-(5-phospho-beta-D-ribosyl)anthranilate = 1-(2-carboxyphenylamino)-1-deoxy-D-ribulose 5-phosphate. It functions in the pathway amino-acid biosynthesis; L-tryptophan biosynthesis; L-tryptophan from chorismate: step 3/5. The sequence is that of N-(5'-phosphoribosyl)anthranilate isomerase from Pyrococcus furiosus (strain ATCC 43587 / DSM 3638 / JCM 8422 / Vc1).